Consider the following 413-residue polypeptide: Putative competence-damage inducible protein (413 aa).

The protein belongs to the CinA family.

The chain is Putative competence-damage inducible protein from Acetivibrio thermocellus (strain ATCC 27405 / DSM 1237 / JCM 9322 / NBRC 103400 / NCIMB 10682 / NRRL B-4536 / VPI 7372) (Clostridium thermocellum).